A 383-amino-acid polypeptide reads, in one-letter code: Serine protease 23 (383 aa).

The signal sequence occupies residues 1–19; the sequence is MAGIPGLLFLLFFLLCAVG. A glycan (N-linked (GlcNAc...) asparagine) is linked at asparagine 93. Serine 109 carries the phosphoserine; by FAM20C modification. Cysteine 160 and cysteine 176 are joined by a disulfide. Histidine 175 functions as the Charge relay system in the catalytic mechanism. N-linked (GlcNAc...) asparagine glycosylation occurs at asparagine 207. Catalysis depends on charge relay system residues aspartate 240 and serine 316.

This sequence belongs to the peptidase S1 family.

The protein resides in the secreted. In Homo sapiens (Human), this protein is Serine protease 23 (PRSS23).